We begin with the raw amino-acid sequence, 196 residues long: Carnitine operon protein CaiE (196 aa).

Residues 173-196 (TQPLRQMEENRPRLQGTTDVTPKR) form a disordered region. The span at 187 to 196 (QGTTDVTPKR) shows a compositional bias: polar residues.

The protein belongs to the transferase hexapeptide repeat family.

Its pathway is amine and polyamine metabolism; carnitine metabolism. Overproduction of CaiE stimulates the activity of CaiB and CaiD. This chain is Carnitine operon protein CaiE, found in Escherichia coli O127:H6 (strain E2348/69 / EPEC).